The primary structure comprises 234 residues: Small ribosomal subunit protein uS10m (234 aa).

The transit peptide at 1 to 23 (MLRIGYRGFSTRSRVFKLSPQEY) directs the protein to the mitochondrion.

This sequence belongs to the universal ribosomal protein uS10 family. In terms of assembly, component of the mitochondrial small ribosomal subunit (mt-SSU).

It is found in the mitochondrion. In terms of biological role, component of the mitochondrial ribosome (mitoribosome), a dedicated translation machinery responsible for the synthesis of mitochondrial genome-encoded proteins, including at least some of the essential transmembrane subunits of the mitochondrial respiratory chain. The mitoribosomes are attached to the mitochondrial inner membrane and translation products are cotranslationally integrated into the membrane. This Candida albicans (strain SC5314 / ATCC MYA-2876) (Yeast) protein is Small ribosomal subunit protein uS10m (RSM10).